The chain runs to 196 residues: MIGNLSGTVDEVYGDHIILNVNDVGYIIYLSAKALNVCYIGSKIKLLIETCANNRENTTQLYGFINKEEQSCLRLLVKVSGVSYKTAMSILSKLTPEQLFLAIMNEDKIALKISGLGPKLINRIITELSGKVSKLETNNNNFYPINEDAVSALINLGYEKTKVYDTIKKYKPNLDTKDIIRTALKELSNYEIDIMQ.

The interval 1-65 (MIGNLSGTVD…ENTTQLYGFI (65 aa)) is domain I. The domain II stretch occupies residues 66-143 (NKEEQSCLRL…KLETNNNNFY (78 aa)). Residues 144–147 (PINE) form a flexible linker region. Residues 147–196 (EDAVSALINLGYEKTKVYDTIKKYKPNLDTKDIIRTALKELSNYEIDIMQ) are domain III.

The protein belongs to the RuvA family. In terms of assembly, homotetramer. Forms an RuvA(8)-RuvB(12)-Holliday junction (HJ) complex. HJ DNA is sandwiched between 2 RuvA tetramers; dsDNA enters through RuvA and exits via RuvB. An RuvB hexamer assembles on each DNA strand where it exits the tetramer. Each RuvB hexamer is contacted by two RuvA subunits (via domain III) on 2 adjacent RuvB subunits; this complex drives branch migration. In the full resolvosome a probable DNA-RuvA(4)-RuvB(12)-RuvC(2) complex forms which resolves the HJ.

The protein localises to the cytoplasm. Functionally, the RuvA-RuvB-RuvC complex processes Holliday junction (HJ) DNA during genetic recombination and DNA repair, while the RuvA-RuvB complex plays an important role in the rescue of blocked DNA replication forks via replication fork reversal (RFR). RuvA specifically binds to HJ cruciform DNA, conferring on it an open structure. The RuvB hexamer acts as an ATP-dependent pump, pulling dsDNA into and through the RuvAB complex. HJ branch migration allows RuvC to scan DNA until it finds its consensus sequence, where it cleaves and resolves the cruciform DNA. In Wolbachia sp. subsp. Brugia malayi (strain TRS), this protein is Holliday junction branch migration complex subunit RuvA.